We begin with the raw amino-acid sequence, 549 residues long: Calcium-dependent protein kinase 5 (549 aa).

G2 is lipidated: N-myristoyl glycine. Positions 43–69 are disordered; the sequence is DEPAGKKAPRGSAAAADAPHAASMKRG. Low complexity predominate over residues 52-64; it reads RGSAAAADAPHAA. A Protein kinase domain is found at 92–350; the sequence is YALGRKLGQG…AHEVLCHPWI (259 aa). ATP is bound by residues 98 to 106 and K121; that span reads LGQGQFGTT. D216 serves as the catalytic Proton acceptor. An autoinhibitory domain region spans residues 356–386; it reads APDRPLDPAVLSRIKQFSAMNKLKKMALRVI. EF-hand domains lie at 393–428, 429–464, 465–500, and 501–534; these read EEIA…YGST, LKDT…LNKL, EREE…HNMP, and DAFL…GNMG. The Ca(2+) site is built by D406, D408, S410, E417, D442, D444, S446, T448, E453, D478, D480, S482, Y484, E489, D512, D514, D516, R518, and E523.

It belongs to the protein kinase superfamily. Ser/Thr protein kinase family. CDPK subfamily.

The protein resides in the membrane. The catalysed reaction is L-seryl-[protein] + ATP = O-phospho-L-seryl-[protein] + ADP + H(+). It catalyses the reaction L-threonyl-[protein] + ATP = O-phospho-L-threonyl-[protein] + ADP + H(+). Activated by calcium. Autophosphorylation may play an important role in the regulation of the kinase activity. May play a role in signal transduction pathways that involve calcium as a second messenger. This chain is Calcium-dependent protein kinase 5, found in Oryza sativa subsp. japonica (Rice).